The primary structure comprises 302 residues: GTP cyclohydrolase FolE2 (302 aa).

Positions 1 to 27 (MPKKQLPPKEERHKLFGSVPPKERTKP) are disordered.

Belongs to the GTP cyclohydrolase IV family.

It carries out the reaction GTP + H2O = 7,8-dihydroneopterin 3'-triphosphate + formate + H(+). The protein operates within cofactor biosynthesis; 7,8-dihydroneopterin triphosphate biosynthesis; 7,8-dihydroneopterin triphosphate from GTP: step 1/1. Converts GTP to 7,8-dihydroneopterin triphosphate. This chain is GTP cyclohydrolase FolE2, found in Oceanobacillus iheyensis (strain DSM 14371 / CIP 107618 / JCM 11309 / KCTC 3954 / HTE831).